The sequence spans 297 residues: Cbb3-type cytochrome c oxidase subunit CcoP (297 aa).

The Cytoplasmic segment spans residues 1–35; it reads MSKKPTTKKEVQTTGHSWDGIEELNTPLPRWWLWT. Residues 36–56 form a helical membrane-spanning segment; it reads FYATIVWGVAYSIAMPAWPIF. Residues 57 to 297 are Periplasmic-facing; it reads ASGATPGILG…SYVHSLGGGQ (241 aa). Cytochrome c domains lie at 108-199 and 206-294; these read YTRN…LKIS and ARAT…HSLG. C121, C124, H125, M174, C219, C222, H223, and M264 together coordinate heme c.

It belongs to the CcoP / FixP family. Component of the cbb3-type cytochrome c oxidase at least composed of CcoN, CcoO, CcoQ and CcoP. Interacts with CcoH (via transmembrane domain). Heme c is required as a cofactor.

It is found in the cell inner membrane. The protein operates within energy metabolism; oxidative phosphorylation. Functionally, C-type cytochrome. Part of the cbb3-type cytochrome c oxidase complex. CcoP subunit is required for transferring electrons from donor cytochrome c via its heme groups to CcoO subunit. From there, electrons are shuttled to the catalytic binuclear center of CcoN subunit where oxygen reduction takes place. The complex also functions as a proton pump. The chain is Cbb3-type cytochrome c oxidase subunit CcoP from Rhodobacter capsulatus (strain ATCC BAA-309 / NBRC 16581 / SB1003).